A 207-amino-acid chain; its full sequence is Cytochrome c biogenesis ATP-binding export protein CcmA (207 aa).

Residues 2-204 enclose the ABC transporter domain; sequence LEVKNLTAIR…NPKLRKIRLG (203 aa). 34-41 serves as a coordination point for ATP; that stretch reads GRNGTGKT.

Belongs to the ABC transporter superfamily. CcmA exporter (TC 3.A.1.107) family. As to quaternary structure, the complex is composed of two ATP-binding proteins (CcmA) and two transmembrane proteins (CcmB).

The protein resides in the cell inner membrane. The enzyme catalyses heme b(in) + ATP + H2O = heme b(out) + ADP + phosphate + H(+). In terms of biological role, part of the ABC transporter complex CcmAB involved in the biogenesis of c-type cytochromes; once thought to export heme, this seems not to be the case, but its exact role is uncertain. Responsible for energy coupling to the transport system. The chain is Cytochrome c biogenesis ATP-binding export protein CcmA from Vibrio cholerae serotype O1 (strain ATCC 39315 / El Tor Inaba N16961).